The primary structure comprises 214 residues: Non-structural protein NP-1 (214 aa).

Disordered regions lie at residues Met1–Asn85 and Glu192–Asn214. Basic residues predominate over residues Ser33–Gly43. Basic and acidic residues predominate over residues Glu44–Gln55. The segment covering Asp56–Ala71 has biased composition (polar residues). The segment covering Glu192–Met201 has biased composition (acidic residues).

It belongs to the Bocaparvovirus Non-structural protein NP-1 family.

It is found in the host nucleus. Functionally, required for the expression of the capsid proteins. Performs the splicing and internal polyadenylation of the viral capsid-encoding mRNA precursor, which allows its maturation and expression. Transactivates the viral promoter. This is Non-structural protein NP-1 (NP1) from Human bocavirus 4 (HBoV4).